Here is a 293-residue protein sequence, read N- to C-terminus: Exosome complex component RRP4 (293 aa).

Residues 79–159 enclose the S1 motif domain; that stretch reads EVGDIVVGRI…SDGAVSLHTR (81 aa). Ser124 is subject to Phosphoserine.

This sequence belongs to the RRP4 family. Component of the RNA exosome core complex (Exo-9), composed of EXOSC1, EXOSC2, EXOSC3, EXOSC4, EXOSC5, EXOSC6, EXOSC7, EXOSC8 and EXOSC9; within the complex interacts with EXOSC4 and EXOSC7. The catalytically inactive RNA exosome core complex (Exo-9) associates with the catalytic subunit EXOSC10/RRP6. Exo-9 may associate with DIS3 to form the nucleolar exosome complex, or DIS3L to form the cytoplasmic exosome complex. Exo-9 is formed by a hexameric base ring consisting of the heterodimers EXOSC4-EXOSC9, EXOSC5-EXOSC8 and EXOSC6-EXOSC7, and a cap ring consisting of EXOSC1, EXOSC2 and EXOSC3. The RNA exosome complex associates with cofactors C1D/RRP47, MPHOSPH6/MPP6 and MTREX/MTR4. Interacts with GTPBP1. Interacts with ZFP36L1 (via N-terminus).

Its subcellular location is the cytoplasm. It is found in the nucleus. The protein resides in the nucleolus. Functionally, non-catalytic component of the RNA exosome complex which has 3'-&gt;5' exoribonuclease activity and participates in a multitude of cellular RNA processing and degradation events. In the nucleus, the RNA exosome complex is involved in proper maturation of stable RNA species such as rRNA, snRNA and snoRNA, in the elimination of RNA processing by-products and non-coding 'pervasive' transcripts, such as antisense RNA species and promoter-upstream transcripts (PROMPTs), and of mRNAs with processing defects, thereby limiting or excluding their export to the cytoplasm. The RNA exosome may be involved in Ig class switch recombination (CSR) and/or Ig variable region somatic hypermutation (SHM) by targeting AICDA deamination activity to transcribed dsDNA substrates. In the cytoplasm, the RNA exosome complex is involved in general mRNA turnover and specifically degrades inherently unstable mRNAs containing AU-rich elements (AREs) within their 3' untranslated regions, and in RNA surveillance pathways, preventing translation of aberrant mRNAs. It seems to be involved in degradation of histone mRNA. The catalytic inactive RNA exosome core complex of 9 subunits (Exo-9) is proposed to play a pivotal role in the binding and presentation of RNA for ribonucleolysis, and to serve as a scaffold for the association with catalytic subunits and accessory proteins or complexes. EXOSC2 as peripheral part of the Exo-9 complex stabilizes the hexameric ring of RNase PH-domain subunits through contacts with EXOSC4 and EXOSC7. The chain is Exosome complex component RRP4 (EXOSC2) from Bos taurus (Bovine).